The sequence spans 225 residues: MNSMEFPLFDRTTPNSVISTTLNDLSNWSRLSSLWPLLYGTSCCFIEFASLIGSRFDFDRYGLVPRSSPRQADLILTAGTVTMKMAPSLVRLYEQMPEPKYVIAMGACTITGGMFSTDSYSTVRGVDKLIPVDVYLPGCPPKPEAIIDAITKLRKKVSREIYEDRTGSQQENRCFTTNHKFHLGRSTRAVNYDQGLLYQSTSTSEIPSEAFFKYKSSVSSHELVN.

Residues C43, C44, C108, and C139 each coordinate [4Fe-4S] cluster.

Belongs to the complex I 20 kDa subunit family. In terms of assembly, NDH is composed of at least 16 different subunits, 5 of which are encoded in the nucleus. Requires [4Fe-4S] cluster as cofactor.

It is found in the plastid. It localises to the chloroplast thylakoid membrane. It catalyses the reaction a plastoquinone + NADH + (n+1) H(+)(in) = a plastoquinol + NAD(+) + n H(+)(out). The enzyme catalyses a plastoquinone + NADPH + (n+1) H(+)(in) = a plastoquinol + NADP(+) + n H(+)(out). In terms of biological role, NDH shuttles electrons from NAD(P)H:plastoquinone, via FMN and iron-sulfur (Fe-S) centers, to quinones in the photosynthetic chain and possibly in a chloroplast respiratory chain. The immediate electron acceptor for the enzyme in this species is believed to be plastoquinone. Couples the redox reaction to proton translocation, and thus conserves the redox energy in a proton gradient. The chain is NAD(P)H-quinone oxidoreductase subunit K, chloroplastic from Nymphaea alba (White water-lily).